The chain runs to 285 residues: 4-hydroxybenzoate octaprenyltransferase (285 aa).

A run of 7 helical transmembrane segments spans residues 20-37 (IGIY…WLAA), 96-116 (FFFV…PFTI), 138-158 (WPQA…FAAI), 166-186 (AWVI…AYAV), 211-231 (IIGF…DLFG), 234-254 (WLYY…QYLL), and 262-282 (AFKA…GIML).

It belongs to the UbiA prenyltransferase family. The cofactor is Mg(2+).

The protein localises to the cell inner membrane. It catalyses the reaction all-trans-octaprenyl diphosphate + 4-hydroxybenzoate = 4-hydroxy-3-(all-trans-octaprenyl)benzoate + diphosphate. The protein operates within cofactor biosynthesis; ubiquinone biosynthesis. Catalyzes the prenylation of para-hydroxybenzoate (PHB) with an all-trans polyprenyl group. Mediates the second step in the final reaction sequence of ubiquinone-8 (UQ-8) biosynthesis, which is the condensation of the polyisoprenoid side chain with PHB, generating the first membrane-bound Q intermediate 3-octaprenyl-4-hydroxybenzoate. The sequence is that of 4-hydroxybenzoate octaprenyltransferase from Hydrogenovibrio crunogenus (strain DSM 25203 / XCL-2) (Thiomicrospira crunogena).